Consider the following 493-residue polypeptide: Glutamyl-tRNA(Gln) amidotransferase subunit A (493 aa).

Active-site charge relay system residues include Lys81 and Ser156. Catalysis depends on Ser180, which acts as the Acyl-ester intermediate.

This sequence belongs to the amidase family. GatA subfamily. In terms of assembly, heterotrimer of A, B and C subunits.

It carries out the reaction L-glutamyl-tRNA(Gln) + L-glutamine + ATP + H2O = L-glutaminyl-tRNA(Gln) + L-glutamate + ADP + phosphate + H(+). Its function is as follows. Allows the formation of correctly charged Gln-tRNA(Gln) through the transamidation of misacylated Glu-tRNA(Gln) in organisms which lack glutaminyl-tRNA synthetase. The reaction takes place in the presence of glutamine and ATP through an activated gamma-phospho-Glu-tRNA(Gln). In Mycobacterium ulcerans (strain Agy99), this protein is Glutamyl-tRNA(Gln) amidotransferase subunit A.